A 605-amino-acid polypeptide reads, in one-letter code: Sulfite reductase [NADPH] flavoprotein alpha-component (605 aa).

Positions 68–206 (VTVLYGSQTG…PAAEWLEGVL (139 aa)) constitute a Flavodoxin-like domain. Residues 74-78 (SQTGN), 121-126 (STHGEG), and 154-185 (VLAL…KRIS) contribute to the FMN site. The segment at 213–234 (GGGSAAPAPAAASQTGESSYSR) is disordered. The FAD-binding FR-type domain maps to 235–454 (TNPFRAEVLE…VQHNQNFKLP (220 aa)). 392-395 (RLYS) serves as a coordination point for FAD. Residues aspartate 495 and 525–533 (SRDTEEKVY) each bind NADP(+).

In terms of assembly, alpha(8)-beta(8). The alpha component is a flavoprotein, the beta component is a hemoprotein. The cofactor is FAD. FMN serves as cofactor.

The catalysed reaction is hydrogen sulfide + 3 NADP(+) + 3 H2O = sulfite + 3 NADPH + 4 H(+). It participates in sulfur metabolism; hydrogen sulfide biosynthesis; hydrogen sulfide from sulfite (NADPH route): step 1/1. Component of the sulfite reductase complex that catalyzes the 6-electron reduction of sulfite to sulfide. This is one of several activities required for the biosynthesis of L-cysteine from sulfate. The flavoprotein component catalyzes the electron flow from NADPH -&gt; FAD -&gt; FMN to the hemoprotein component. This is Sulfite reductase [NADPH] flavoprotein alpha-component (cysJ) from Bacillus subtilis (strain 168).